Reading from the N-terminus, the 119-residue chain is Protein yippee-like 3 (119 aa).

A Yippee domain is found at 19 to 116 (RRYSCAHCRA…IELNHMIKDN (98 aa)). Positions 23, 26, 79, and 82 each coordinate Zn(2+).

Belongs to the yippee family. In terms of processing, probably ubiquitinated leading to its degradation by the proteasome.

The protein localises to the nucleus. It is found in the nucleolus. Functionally, involved in proliferation and apoptosis in myeloid precursor cells. This is Protein yippee-like 3 (YPEL3) from Bos taurus (Bovine).